Here is a 173-residue protein sequence, read N- to C-terminus: Calcium-binding protein 5 (173 aa).

EF-hand domains lie at 28–63, 82–99, 105–140, and 142–173; these read DEIEELREAFLEFDKDRDGFISCKDLGNLMRTMGYM, GRVDFDDFVELMTPKLLA, IGVQEMRDAFKEFDTNGDGEITLVELQQAMQRLLGE, and LTPREISEVVREADVNGDGTVDFEEFVKMMSR. Residues Asp41, Asp43, Asp45, and Asp52 each contribute to the Ca(2+) site. Residues Asp118, Asn120, Asp122, Glu124, Glu129, Asp155, Asn157, Asp159, Thr161, and Glu166 each contribute to the Ca(2+) site.

Interacts with CACNA1C (via C-terminal CDB motif) in a calcium-dependent manner. Interacts with STXBP1. Interacts with MYO6. Retina.

It is found in the cytoplasm. In terms of biological role, inhibits calcium-dependent inactivation of L-type calcium channel and shifts voltage dependence of activation to more depolarized membrane potentials. Involved in the transmission of light signals. May positively regulate neurotransmitter vesicle endocytosis and exocytosis in a salt-dependent manner. May play a role in the extension and network organization of neurites. The protein is Calcium-binding protein 5 (CABP5) of Homo sapiens (Human).